The primary structure comprises 253 residues: 1-(5-phosphoribosyl)-5-[(5-phosphoribosylamino)methylideneamino] imidazole-4-carboxamide isomerase (253 aa).

D11 functions as the Proton acceptor in the catalytic mechanism. D132 functions as the Proton donor in the catalytic mechanism.

Belongs to the HisA/HisF family.

The protein localises to the cytoplasm. The enzyme catalyses 1-(5-phospho-beta-D-ribosyl)-5-[(5-phospho-beta-D-ribosylamino)methylideneamino]imidazole-4-carboxamide = 5-[(5-phospho-1-deoxy-D-ribulos-1-ylimino)methylamino]-1-(5-phospho-beta-D-ribosyl)imidazole-4-carboxamide. It participates in amino-acid biosynthesis; L-histidine biosynthesis; L-histidine from 5-phospho-alpha-D-ribose 1-diphosphate: step 4/9. This is 1-(5-phosphoribosyl)-5-[(5-phosphoribosylamino)methylideneamino] imidazole-4-carboxamide isomerase from Methylobacterium nodulans (strain LMG 21967 / CNCM I-2342 / ORS 2060).